The chain runs to 47 residues: Large ribosomal subunit protein eL40 (47 aa).

The protein belongs to the eukaryotic ribosomal protein eL40 family.

The sequence is that of Large ribosomal subunit protein eL40 from Methanococcus vannielii (strain ATCC 35089 / DSM 1224 / JCM 13029 / OCM 148 / SB).